Reading from the N-terminus, the 637-residue chain is Probable potassium transport system protein Kup (637 aa).

The next 12 membrane-spanning stretches (helical) occupy residues Leu-24–Leu-44, Val-64–Val-84, Ala-113–Ile-133, Pro-151–Ile-171, Leu-182–Ile-202, Leu-225–Leu-245, Ala-261–Ile-281, Pro-290–Ala-310, Ile-351–Phe-371, Tyr-381–Val-401, Leu-409–Asn-429, and Val-433–Thr-453.

It belongs to the HAK/KUP transporter (TC 2.A.72) family.

Its subcellular location is the cell inner membrane. The catalysed reaction is K(+)(in) + H(+)(in) = K(+)(out) + H(+)(out). Its function is as follows. Transport of potassium into the cell. Likely operates as a K(+):H(+) symporter. This Burkholderia ambifaria (strain ATCC BAA-244 / DSM 16087 / CCUG 44356 / LMG 19182 / AMMD) (Burkholderia cepacia (strain AMMD)) protein is Probable potassium transport system protein Kup.